The chain runs to 24 residues: Brevinin-1Bc (24 aa).

Cys-18 and Cys-24 are oxidised to a cystine.

In terms of tissue distribution, expressed by the skin glands.

The protein resides in the secreted. Functionally, antibacterial activity against Gram-positive bacterium S.aureus. The chain is Brevinin-1Bc from Lithobates berlandieri (Rio Grande leopard frog).